The primary structure comprises 450 residues: Saccharopine dehydrogenase [NADP(+), L-glutamate-forming] (450 aa).

Residues 11 to 14, 33 to 35, 55 to 56, Ile-76, 98 to 99, 125 to 127, and Ser-175 each bind NADP(+); these read SGFV, CRT, DV, TS, and LDP. L-saccharopine is bound by residues 99–100 and Asp-126; that span reads SY. L-saccharopine-binding positions include Arg-224 and 245-247; that span reads TLR.

This sequence belongs to the saccharopine dehydrogenase family. In terms of assembly, homodimer.

It carries out the reaction L-saccharopine + NADP(+) + H2O = (S)-2-amino-6-oxohexanoate + L-glutamate + NADPH + H(+). It participates in amino-acid biosynthesis; L-lysine biosynthesis via AAA pathway; L-lysine from L-alpha-aminoadipate (fungal route): step 2/3. In Pyricularia oryzae (strain 70-15 / ATCC MYA-4617 / FGSC 8958) (Rice blast fungus), this protein is Saccharopine dehydrogenase [NADP(+), L-glutamate-forming] (LYS3).